A 277-amino-acid chain; its full sequence is Tumor necrosis factor-inducible gene 6 protein (277 aa).

The N-terminal stretch at 1–17 (MIILIYLFLLLWEDTQG) is a signal peptide. One can recognise a Link domain in the interval 36–129 (GVYHREARSG…SERWDAYCYN (94 aa)). Cystine bridges form between Cys58–Cys127, Cys82–Cys103, and Cys135–Cys161. Asn118 carries an N-linked (GlcNAc...) asparagine glycan. The CUB domain occupies 135-247 (CGGVFTDPKQ…GGFQIKYVAM (113 aa)). Residues Glu183, Asp191, Asp232, Ser234, and Val235 each coordinate Ca(2+). A disulfide bond links Cys188 and Cys210. N-linked (GlcNAc...) asparagine glycosylation occurs at Asn258.

Interacts (via Link domain) with inter-alpha-inhibitor (I-alpha-I) component bikunin. Interacts with ITIH2/HC2; this interaction is required for transesterification of the HC to hyaluronan. Interacts (via Link and CUB domains) with ITIH1. Chondroitin sulfate may be required for the stability of the complex. Interacts (via Link domain) with various C-X-C and C-C chemokines including PF4, CXCL8, CXCL11, CXCL12, CCL2, CCL7, CCL19, CCL21, and CCL27; this interaction interferes with chemokine binding to glycosaminoglycans. Interacts (primarily via Link domain) with BMP2; this interaction is inhibited by hyaluronan. Interacts (via both Link and CUB domains) with TNFSF11. Interacts (via CUB domain) with FN1 (via type III repeats 9-14); this interaction enhances fibronectin fibril assembly. TNFAIP6 may act as a bridging molecule between FN1 and THBS1. Post-translationally, N-glycosylated. As to expression, expressed in airway epithelium and submucosal gland (at protein level). Colocalizes with bikunin at the ciliary border. Present in bronchoalveolar lavage fluid (at protein level). Expressed in mesenchymal stem cells. Found in the synovial fluid of patients with rheumatoid arthritis.

It is found in the secreted. Functionally, major regulator of extracellular matrix organization during tissue remodeling. Catalyzes the transfer of a heavy chain (HC) from inter-alpha-inhibitor (I-alpha-I) complex to hyaluronan. Cleaves the ester bond between the C-terminus of the HC and GalNAc residue of the chondroitin sulfate chain in I-alpha-I complex followed by transesterification of the HC to hyaluronan. In the process, potentiates the antiprotease function of I-alpha-I complex through release of free bikunin. Acts as a catalyst in the formation of hyaluronan-HC oligomers and hyaluronan-rich matrix surrounding the cumulus cell-oocyte complex, a necessary step for oocyte fertilization. Assembles hyaluronan in pericellular matrices that serve as platforms for receptor clustering and signaling. Enables binding of hyaluronan deposited on the surface of macrophages to LYVE1 on lymphatic endothelium and facilitates macrophage extravasation. Alters hyaluronan binding to functionally latent CD44 on vascular endothelium, switching CD44 into an active state that supports leukocyte rolling. Modulates the interaction of chemokines with extracellular matrix components and proteoglycans on endothelial cell surface, likely preventing chemokine gradient formation. In a negative feedback mechanism, may limit excessive neutrophil recruitment at inflammatory sites by antagonizing the association of CXCL8 with glycosaminoglycans on vascular endothelium. Has a role in osteogenesis and bone remodeling. Inhibits BMP2-dependent differentiation of mesenchymal stem cell to osteoblasts. Protects against bone erosion during inflammation by inhibiting TNFSF11/RANKL-dependent osteoclast activation. This is Tumor necrosis factor-inducible gene 6 protein (TNFAIP6) from Homo sapiens (Human).